We begin with the raw amino-acid sequence, 495 residues long: Aspartyl/glutamyl-tRNA(Asn/Gln) amidotransferase subunit B (495 aa).

It belongs to the GatB/GatE family. GatB subfamily. As to quaternary structure, heterotrimer of A, B and C subunits.

The enzyme catalyses L-glutamyl-tRNA(Gln) + L-glutamine + ATP + H2O = L-glutaminyl-tRNA(Gln) + L-glutamate + ADP + phosphate + H(+). The catalysed reaction is L-aspartyl-tRNA(Asn) + L-glutamine + ATP + H2O = L-asparaginyl-tRNA(Asn) + L-glutamate + ADP + phosphate + 2 H(+). In terms of biological role, allows the formation of correctly charged Asn-tRNA(Asn) or Gln-tRNA(Gln) through the transamidation of misacylated Asp-tRNA(Asn) or Glu-tRNA(Gln) in organisms which lack either or both of asparaginyl-tRNA or glutaminyl-tRNA synthetases. The reaction takes place in the presence of glutamine and ATP through an activated phospho-Asp-tRNA(Asn) or phospho-Glu-tRNA(Gln). The sequence is that of Aspartyl/glutamyl-tRNA(Asn/Gln) amidotransferase subunit B from Methanosarcina mazei (strain ATCC BAA-159 / DSM 3647 / Goe1 / Go1 / JCM 11833 / OCM 88) (Methanosarcina frisia).